A 145-amino-acid polypeptide reads, in one-letter code: Flagellar assembly factor FliW (145 aa).

It belongs to the FliW family. In terms of assembly, interacts with translational regulator CsrA and flagellin(s).

It localises to the cytoplasm. Acts as an anti-CsrA protein, binds CsrA and prevents it from repressing translation of its target genes, one of which is flagellin. Binds to flagellin and participates in the assembly of the flagellum. In Anoxybacillus flavithermus (strain DSM 21510 / WK1), this protein is Flagellar assembly factor FliW.